Reading from the N-terminus, the 544-residue chain is Chaperonin GroEL (544 aa).

Residues 30–33 (TLGP), Lys-51, 87–91 (DGTTT), Gly-415, and Asp-495 contribute to the ATP site.

The protein belongs to the chaperonin (HSP60) family. Forms a cylinder of 14 subunits composed of two heptameric rings stacked back-to-back. Interacts with the co-chaperonin GroES.

It localises to the cell outer membrane. It catalyses the reaction ATP + H2O + a folded polypeptide = ADP + phosphate + an unfolded polypeptide.. Functionally, together with its co-chaperonin GroES, plays an essential role in assisting protein folding. The GroEL-GroES system forms a nano-cage that allows encapsulation of the non-native substrate proteins and provides a physical environment optimized to promote and accelerate protein folding. This is Chaperonin GroEL from Neisseria gonorrhoeae.